Reading from the N-terminus, the 167-residue chain is Ammonium/H(+) antiporter subunit AmhM (167 aa).

In terms of domain architecture, RCK C-terminal spans 79–163 (IDRIKLIRKQ…IQKFEELCAC (85 aa)).

Interacts with AmhT.

It is found in the cell membrane. In terms of biological role, modulates the activity of the ammonium/proton antiporter AmhT. This chain is Ammonium/H(+) antiporter subunit AmhM (amhM), found in Alkalihalophilus pseudofirmus (strain ATCC BAA-2126 / JCM 17055 / OF4) (Bacillus pseudofirmus).